The primary structure comprises 88 residues: Small ribosomal subunit protein uS15 (88 aa).

Belongs to the universal ribosomal protein uS15 family. Part of the 30S ribosomal subunit. Forms a bridge to the 50S subunit in the 70S ribosome, contacting the 23S rRNA.

Its function is as follows. One of the primary rRNA binding proteins, it binds directly to 16S rRNA where it helps nucleate assembly of the platform of the 30S subunit by binding and bridging several RNA helices of the 16S rRNA. Functionally, forms an intersubunit bridge (bridge B4) with the 23S rRNA of the 50S subunit in the ribosome. The polypeptide is Small ribosomal subunit protein uS15 (Leptospira biflexa serovar Patoc (strain Patoc 1 / Ames)).